A 396-amino-acid polypeptide reads, in one-letter code: Phosphopentomutase (396 aa).

6 residues coordinate Mn(2+): Asp13, Asp288, His293, Asp329, His330, and His341.

Belongs to the phosphopentomutase family. The cofactor is Mn(2+).

The protein resides in the cytoplasm. The enzyme catalyses 2-deoxy-alpha-D-ribose 1-phosphate = 2-deoxy-D-ribose 5-phosphate. It catalyses the reaction alpha-D-ribose 1-phosphate = D-ribose 5-phosphate. It participates in carbohydrate degradation; 2-deoxy-D-ribose 1-phosphate degradation; D-glyceraldehyde 3-phosphate and acetaldehyde from 2-deoxy-alpha-D-ribose 1-phosphate: step 1/2. Functionally, isomerase that catalyzes the conversion of deoxy-ribose 1-phosphate (dRib-1-P) and ribose 1-phosphate (Rib-1-P) to deoxy-ribose 5-phosphate (dRib-5-P) and ribose 5-phosphate (Rib-5-P), respectively. The chain is Phosphopentomutase from Clostridium perfringens (strain SM101 / Type A).